Here is a 457-residue protein sequence, read N- to C-terminus: Argininosuccinate lyase (457 aa).

This sequence belongs to the lyase 1 family. Argininosuccinate lyase subfamily.

It is found in the cytoplasm. It carries out the reaction 2-(N(omega)-L-arginino)succinate = fumarate + L-arginine. Its pathway is amino-acid biosynthesis; L-arginine biosynthesis; L-arginine from L-ornithine and carbamoyl phosphate: step 3/3. This is Argininosuccinate lyase from Bacillus pumilus (strain SAFR-032).